The sequence spans 299 residues: MQLHKPVLLKDVIENLEINPEGIYVDLTLGYAGHSSEILKKLSSKGKLIGFDQDSFAIEKSRQRLSQISDNFVLINDNFVNFKVYLDKMNISFVDGFLLDLGVSSVQLDFAHRGFSYSKLGPLDMRMNLDQPLKADDIVNGYDQESLCKIFIENADVKLAKQVAKGIVNNRPIKDTLELVEVIRSSLPAALVRKKNPAKAVFQAIRIAVNDELIVLKKFLAQSLDFLKKDSKMLIITFHSIEDRIVKDFFKRQVKNKHDRRLPIMEQKDYQVKTIKPTEEEIAQNRRAKSSKLRIIKKL.

S-adenosyl-L-methionine contacts are provided by residues 32 to 34, Asp52, Phe79, Asp100, and Gln107; that span reads AGH.

The protein belongs to the methyltransferase superfamily. RsmH family.

It localises to the cytoplasm. It carries out the reaction cytidine(1402) in 16S rRNA + S-adenosyl-L-methionine = N(4)-methylcytidine(1402) in 16S rRNA + S-adenosyl-L-homocysteine + H(+). Functionally, specifically methylates the N4 position of cytidine in position 1402 (C1402) of 16S rRNA. In Mycoplasmopsis pulmonis (strain UAB CTIP) (Mycoplasma pulmonis), this protein is Ribosomal RNA small subunit methyltransferase H.